Reading from the N-terminus, the 358-residue chain is MLPQDKLDLILRRHEEISARLTENPDAATFVSLSRELAGLDEVAQAIRAYRDEMTEISGMEAMLADPATEPELLALAEEELQDARQRLGAFEQHLRIALLPKDADDEKSAILEIRAGTGGDEAALFAGDLFRMYQRYAEAKGWGVEILSVSEGTAGGYKEIVAEITGKGVFAKLKFESGTHRVQRVPDTETQGRIHTSAATVAVLPQAEEVDVEINEADLKIDTMRAQGAGGQHVNKTESAIRITHLPTGTVIFVQDERSQHKNRARAMSLLRSRIYDAKRQQLEAERAADRKAQVGSGDRSERIRTYNFPQGRLTDHRINLTLYKLDKVMTGEALDEVIDALITDYQAAQLAASEGA.

N5-methylglutamine is present on Gln-233.

This sequence belongs to the prokaryotic/mitochondrial release factor family. Post-translationally, methylated by PrmC. Methylation increases the termination efficiency of RF1.

It is found in the cytoplasm. Its function is as follows. Peptide chain release factor 1 directs the termination of translation in response to the peptide chain termination codons UAG and UAA. The protein is Peptide chain release factor 1 of Beijerinckia indica subsp. indica (strain ATCC 9039 / DSM 1715 / NCIMB 8712).